Consider the following 154-residue polypeptide: 6,7-dimethyl-8-ribityllumazine synthase (154 aa).

5-amino-6-(D-ribitylamino)uracil is bound by residues tryptophan 22, 56–58, and 80–82; these read SHE and AVI. 85 to 86 contributes to the (2S)-2-hydroxy-3-oxobutyl phosphate binding site; that stretch reads DT. Residue histidine 88 is the Proton donor of the active site. Phenylalanine 113 contributes to the 5-amino-6-(D-ribitylamino)uracil binding site. Arginine 127 is a (2S)-2-hydroxy-3-oxobutyl phosphate binding site.

This sequence belongs to the DMRL synthase family.

It carries out the reaction (2S)-2-hydroxy-3-oxobutyl phosphate + 5-amino-6-(D-ribitylamino)uracil = 6,7-dimethyl-8-(1-D-ribityl)lumazine + phosphate + 2 H2O + H(+). It participates in cofactor biosynthesis; riboflavin biosynthesis; riboflavin from 2-hydroxy-3-oxobutyl phosphate and 5-amino-6-(D-ribitylamino)uracil: step 1/2. Catalyzes the formation of 6,7-dimethyl-8-ribityllumazine by condensation of 5-amino-6-(D-ribitylamino)uracil with 3,4-dihydroxy-2-butanone 4-phosphate. This is the penultimate step in the biosynthesis of riboflavin. This is 6,7-dimethyl-8-ribityllumazine synthase from Deinococcus geothermalis (strain DSM 11300 / CIP 105573 / AG-3a).